The primary structure comprises 129 residues: Glycine cleavage system H protein (129 aa).

The region spanning 24-106 (TYTVGITEHA…YAGGWIFKIK (83 aa)) is the Lipoyl-binding domain. Lysine 65 carries the N6-lipoyllysine modification.

It belongs to the GcvH family. In terms of assembly, the glycine cleavage system is composed of four proteins: P, T, L and H. The cofactor is (R)-lipoate.

Its function is as follows. The glycine cleavage system catalyzes the degradation of glycine. The H protein shuttles the methylamine group of glycine from the P protein to the T protein. The sequence is that of Glycine cleavage system H protein from Citrobacter koseri (strain ATCC BAA-895 / CDC 4225-83 / SGSC4696).